The following is a 723-amino-acid chain: PX domain-containing protein EREL1 (723 aa).

The span at 1 to 12 shows a compositional bias: basic residues; that stretch reads MMQRRSPPKHRH. The tract at residues 1 to 26 is disordered; that stretch reads MMQRRSPPKHRHDGTSPLPLGMDWSP. Positions 48-165 constitute a PX domain; that stretch reads YCVTIPSWIV…SFLELEAAAR (118 aa). 2 disordered regions span residues 169–193 and 209–230; these read QDVDQNASDSNNDRSSTSSSPMVHP and YGSDTAYETSEVGSPSVGQDDI. Positions 172-193 are enriched in low complexity; the sequence is DQNASDSNNDRSSTSSSPMVHP. Residues 209 to 225 are compositionally biased toward polar residues; the sequence is YGSDTAYETSEVGSPSV. Coiled coils occupy residues 401–474 and 503–555; these read NERL…LRQK and KHVL…LEKE. Residues 698–723 form a disordered region; sequence DVKTTEDVNEENSDEKDEASRETLKR. A compositionally biased stretch (acidic residues) spans 704–714; that stretch reads DVNEENSDEKD.

Its subcellular location is the cytoplasm. It localises to the cytosol. The protein localises to the endosome membrane. In terms of biological role, acts as an effector of RABF2A and RABF2B. Involved in vacuolar transport of storage proteins. Regulates membrane trafficking to protein storage vacuoles (PSVs). Binds specifically to phosphatidylinositol 3-monophosphate (PtdIns3P). This Arabidopsis thaliana (Mouse-ear cress) protein is PX domain-containing protein EREL1.